The sequence spans 485 residues: Glutamyl-tRNA(Gln) amidotransferase subunit A (485 aa).

Residues K79 and S154 each act as charge relay system in the active site. S178 functions as the Acyl-ester intermediate in the catalytic mechanism.

The protein belongs to the amidase family. GatA subfamily. Heterotrimer of A, B and C subunits.

The enzyme catalyses L-glutamyl-tRNA(Gln) + L-glutamine + ATP + H2O = L-glutaminyl-tRNA(Gln) + L-glutamate + ADP + phosphate + H(+). Allows the formation of correctly charged Gln-tRNA(Gln) through the transamidation of misacylated Glu-tRNA(Gln) in organisms which lack glutaminyl-tRNA synthetase. The reaction takes place in the presence of glutamine and ATP through an activated gamma-phospho-Glu-tRNA(Gln). This is Glutamyl-tRNA(Gln) amidotransferase subunit A from Bacillus pumilus (strain SAFR-032).